Consider the following 333-residue polypeptide: Methionine import ATP-binding protein MetN 1 (333 aa).

The ABC transporter domain occupies 2–241 (ITFEGVEKVY…PETETAKSFV (240 aa)). Position 38–45 (38–45 (GFSGAGKS)) interacts with ATP.

Belongs to the ABC transporter superfamily. Methionine importer (TC 3.A.1.24) family. As to quaternary structure, the complex is composed of two ATP-binding proteins (MetN), two transmembrane proteins (MetI) and a solute-binding protein (MetQ).

It localises to the cell membrane. The catalysed reaction is L-methionine(out) + ATP + H2O = L-methionine(in) + ADP + phosphate + H(+). It carries out the reaction D-methionine(out) + ATP + H2O = D-methionine(in) + ADP + phosphate + H(+). Part of the ABC transporter complex MetNIQ involved in methionine import. Responsible for energy coupling to the transport system. This Bacillus licheniformis (strain ATCC 14580 / DSM 13 / JCM 2505 / CCUG 7422 / NBRC 12200 / NCIMB 9375 / NCTC 10341 / NRRL NRS-1264 / Gibson 46) protein is Methionine import ATP-binding protein MetN 1.